Reading from the N-terminus, the 396-residue chain is S-adenosylmethionine synthase (396 aa).

H15 is an ATP binding site. D17 serves as a coordination point for Mg(2+). Residue E43 coordinates K(+). Residues E56 and Q99 each coordinate L-methionine. Residues 99–109 (QSPDIALGVNR) form a flexible loop region. Residues 175–177 (DGK), 241–242 (RF), D250, 256–257 (RK), A273, and K277 each bind ATP. D250 serves as a coordination point for L-methionine. K281 is an L-methionine binding site.

This sequence belongs to the AdoMet synthase family. Homotetramer; dimer of dimers. Mg(2+) is required as a cofactor. It depends on K(+) as a cofactor.

It localises to the cytoplasm. It catalyses the reaction L-methionine + ATP + H2O = S-adenosyl-L-methionine + phosphate + diphosphate. It participates in amino-acid biosynthesis; S-adenosyl-L-methionine biosynthesis; S-adenosyl-L-methionine from L-methionine: step 1/1. Its function is as follows. Catalyzes the formation of S-adenosylmethionine (AdoMet) from methionine and ATP. The overall synthetic reaction is composed of two sequential steps, AdoMet formation and the subsequent tripolyphosphate hydrolysis which occurs prior to release of AdoMet from the enzyme. The sequence is that of S-adenosylmethionine synthase from Carboxydothermus hydrogenoformans (strain ATCC BAA-161 / DSM 6008 / Z-2901).